The following is a 236-amino-acid chain: Adenosine 5'-phosphosulfate reductase 2 (236 aa).

Cysteine 122, cysteine 123, cysteine 205, and cysteine 208 together coordinate [4Fe-4S] cluster. The disordered stretch occupies residues 216-236 (NDERAGRWAGREKTECGLHQE). The active-site Nucleophile; cysteine thiosulfonate intermediate is the cysteine 231.

Belongs to the PAPS reductase family. CysH subfamily. It depends on [4Fe-4S] cluster as a cofactor.

The protein localises to the cytoplasm. The enzyme catalyses [thioredoxin]-disulfide + sulfite + AMP + 2 H(+) = adenosine 5'-phosphosulfate + [thioredoxin]-dithiol. Its pathway is sulfur metabolism; hydrogen sulfide biosynthesis; sulfite from sulfate. Its function is as follows. Catalyzes the formation of sulfite from adenosine 5'-phosphosulfate (APS) using thioredoxin as an electron donor. This chain is Adenosine 5'-phosphosulfate reductase 2, found in Bacillus subtilis (strain 168).